A 430-amino-acid chain; its full sequence is Rosmarinate synthase (430 aa).

Residue H152 is the Proton acceptor of the active site. The interval 178-210 is disordered; that stretch reads TPLPHFDRSSLSARNPPQPQFSHAEYQPPPTLE. Catalysis depends on D377, which acts as the Proton acceptor.

This sequence belongs to the plant acyltransferase family.

It carries out the reaction (2R)-3-(3,4-dihydroxyphenyl)lactate + (E)-caffeoyl-CoA = (R)-rosmarinate + CoA. In terms of biological role, involved in the biosynthesis of rosmarinic acid, a compound with antiviral, antimicrobial and anti-inflammatory activities. Can use 4-coumaroyl- and caffeoyl-CoA as hydroxycinnamoyl donors and 4-Hydroxyphenyllactate and 3.4-Dihydroxyphenyllactate, but not shikimate or quinate, as hydroxycinnamoyl acceptors. Can also putatively catalyze amide formation with D-amino acids as acceptors. The polypeptide is Rosmarinate synthase (RAS) (Plectranthus scutellarioides (Coleus)).